Consider the following 652-residue polypeptide: ATP-binding cassette sub-family G member 5 (652 aa).

The disordered stretch occupies residues 1–25 (MGELPFLSPEGARGPHINRGSLSSL). The Cytoplasmic portion of the chain corresponds to 1 to 384 (MGELPFLSPE…RVTRNLMRNK (384 aa)). Residues 39-294 (LGVLHVSYSV…FNNCGYPCPE (256 aa)) enclose the ABC transporter domain. Cysteine 61 is lipidated: S-palmitoyl cysteine. Residue 87-94 (GSSGSGKT) coordinates ATP. Residues 385-405 (QAVIMRLVQNLIMGLFLIFYL) form a helical membrane-spanning segment. The ABC transmembrane type-2 domain occupies 389-646 (MRLVQNLIMG…ILGIVIFKVR (258 aa)). Residues 406–422 (LRVQNNTLKGAVQDRVG) are Extracellular-facing. Residue asparagine 410 is glycosylated (N-linked (GlcNAc...) asparagine). The chain crosses the membrane as a helical span at residues 423–443 (LLYQLVGATPYTGMLNAVNLF). Residues 444-468 (PMLRAVSDQESQDGLYHKWQMLLAY) lie on the Cytoplasmic side of the membrane. The chain crosses the membrane as a helical span at residues 469–490 (VLHVLPFSVIATVIFSSVCYWT). Topologically, residues 491–501 (LGLYPEVARFG) are extracellular. The helical transmembrane segment at 502–522 (YFSAALLAPHLIGEFLTLVLL) threads the bilayer. The Cytoplasmic portion of the chain corresponds to 523-529 (GIVQNPN). The helical transmembrane segment at 530-550 (IVNSIVALLSISGLLIGSGFI) threads the bilayer. The Extracellular segment spans residues 551–624 (RNIQEMPIPL…PGATSRFTAN (74 aa)). 2 N-linked (GlcNAc...) asparagine glycosylation sites follow: asparagine 585 and asparagine 592. Residues 625–645 (FLILYGFIPALVILGIVIFKV) form a helical membrane-spanning segment. Residues 646–652 (RDYLISR) lie on the Cytoplasmic side of the membrane.

This sequence belongs to the ABC transporter superfamily. ABCG family. Eye pigment precursor importer (TC 3.A.1.204) subfamily. Heterodimer with ABCG8. It depends on Mg(2+) as a cofactor. Post-translationally, N-glycosylated. N-glycosylation is important for efficient export out of the endoplasmic reticulum. Detected in liver and jejunum. Detected on enterocyte villi (at protein level). Expressed in jejunum, ileum and, at lower level, in the liver.

The protein resides in the cell membrane. Its subcellular location is the apical cell membrane. The enzyme catalyses cholesterol(in) + ATP + H2O = cholesterol(out) + ADP + phosphate + H(+). It carries out the reaction sitosterol(in) + ATP + H2O = sitosterol(out) + ADP + phosphate + H(+). With respect to regulation, cholesterol transport is inhibited by vanadate and by beryllium fluoride. Functionally, ABCG5 and ABCG8 form an obligate heterodimer that mediates Mg(2+)- and ATP-dependent sterol transport across the cell membrane. Plays an essential role in the selective transport of dietary plant sterols and cholesterol in and out of the enterocytes and in the selective sterol excretion by the liver into bile. Required for normal sterol homeostasis. The heterodimer with ABCG8 has ATPase activity. The sequence is that of ATP-binding cassette sub-family G member 5 from Mus musculus (Mouse).